Here is a 396-residue protein sequence, read N- to C-terminus: Ornithine aminotransferase (396 aa).

Residue K255 is modified to N6-(pyridoxal phosphate)lysine.

The protein belongs to the class-III pyridoxal-phosphate-dependent aminotransferase family. OAT subfamily. Pyridoxal 5'-phosphate is required as a cofactor.

It localises to the cytoplasm. The enzyme catalyses a 2-oxocarboxylate + L-ornithine = L-glutamate 5-semialdehyde + an L-alpha-amino acid. It participates in amino-acid biosynthesis; L-proline biosynthesis; L-glutamate 5-semialdehyde from L-ornithine: step 1/1. Functionally, catalyzes the interconversion of ornithine to glutamate semialdehyde. This is Ornithine aminotransferase from Staphylococcus carnosus (strain TM300).